The chain runs to 164 residues: Photosystem II extrinsic protein V (164 aa).

The N-terminal stretch at 1–27 (MNRISIYRIKVLAFLFAVSTYVYPASS) is a signal peptide. Cysteine 64, cysteine 67, histidine 68, and histidine 119 together coordinate heme c.

It belongs to the cytochrome c family. PsbV subfamily. As to quaternary structure, PSII is composed of 1 copy each of membrane proteins PsbA, PsbB, PsbC, PsbD, PsbE, PsbF, PsbH, PsbI, PsbJ, PsbK, PsbL, PsbM, PsbT, PsbY, PsbZ, Psb30/Ycf12, at least 3 peripheral proteins of the oxygen-evolving complex and a large number of cofactors. It forms dimeric complexes. The extrinsic subunits in red algae are PsbO (OEC33), PsbQ', cytochrome c-550 and PsbU. Heme c is required as a cofactor.

The protein localises to the plastid. The protein resides in the chloroplast thylakoid membrane. One of the extrinsic, lumenal subunits of photosystem II (PSII). PSII is a light-driven water plastoquinone oxidoreductase, using light energy to abstract electrons from H(2)O, generating a proton gradient subsequently used for ATP formation. The extrinsic proteins stabilize the structure of photosystem II oxygen-evolving complex (OEC), the ion environment of oxygen evolution and protect the OEC against heat-induced inactivation. This is Photosystem II extrinsic protein V from Cyanidium caldarium (Red alga).